The sequence spans 379 residues: Glucose-1-phosphate adenylyltransferase (379 aa).

Alpha-D-glucose 1-phosphate contacts are provided by residues Gly-164, 179 to 180 (EK), and Ser-190.

Belongs to the bacterial/plant glucose-1-phosphate adenylyltransferase family. Homotetramer.

It catalyses the reaction alpha-D-glucose 1-phosphate + ATP + H(+) = ADP-alpha-D-glucose + diphosphate. It functions in the pathway glycan biosynthesis; glycogen biosynthesis. Functionally, involved in the biosynthesis of ADP-glucose, a building block required for the elongation reactions to produce glycogen. Catalyzes the reaction between ATP and alpha-D-glucose 1-phosphate (G1P) to produce pyrophosphate and ADP-Glc. The chain is Glucose-1-phosphate adenylyltransferase from Streptococcus agalactiae serotype III (strain NEM316).